The following is a 66-amino-acid chain: Phylloseptin-H7 (66 aa).

The signal sequence occupies residues 1-22 (MAFLKKSLFLVLFLGLVSLSIC). Residues 23 to 44 (EEEKRETEEEENDQEEDDKSEE) constitute a propeptide that is removed on maturation. The interval 25-44 (EKRETEEEENDQEEDDKSEE) is disordered. Residues 30–41 (EEEENDQEEDDK) are compositionally biased toward acidic residues. Leucine 65 bears the Leucine amide mark.

As to expression, expressed by the skin glands.

It is found in the secreted. Functionally, has antimicrobial activity. This chain is Phylloseptin-H7, found in Pithecopus hypochondrialis (Orange-legged leaf frog).